A 317-amino-acid chain; its full sequence is Olfactory receptor 6Q1 (317 aa).

Over 1–27 (MQPYTKNWTQVTEFVMMGFAGIHEAHL) the chain is Extracellular. N-linked (GlcNAc...) asparagine glycosylation occurs at Asn7. Residues 28 to 48 (LFFILFLTMYLFTLVENLAII) traverse the membrane as a helical segment. The Cytoplasmic portion of the chain corresponds to 49-56 (LVVGLDHR). A helical membrane pass occupies residues 57-77 (LRRPMYFFLTHLSCLEIWYTS). The Extracellular segment spans residues 78–103 (VTVPKMLAGFIGVDGGKNISYADCLS). Asn95 carries N-linked (GlcNAc...) asparagine glycosylation. A disulfide bridge links Cys101 with Cys193. Residues 104–124 (QLFIFTFLGATECFLLAAMAY) form a helical membrane-spanning segment. The Cytoplasmic portion of the chain corresponds to 125-143 (DRYVAICMPLHYGAFVSWG). Residues 144–164 (TCIRLAAACWLVGFLTPILPI) form a helical membrane-spanning segment. The Extracellular portion of the chain corresponds to 165-201 (YLLSQLTFYGPNVIDHFSCDASPLLALSCSDVTWKET). Residues 202-221 (VDFLVSLAVLLASSMVIAVS) traverse the membrane as a helical segment. Over 222–241 (YGNIVWTLLHIRSAAERWKA) the chain is Cytoplasmic. Residues 242–262 (FSTCAAHLTVVSLFYGTLFFM) traverse the membrane as a helical segment. Over 263 to 275 (YVQTKVTSSINFN) the chain is Extracellular. The chain crosses the membrane as a helical span at residues 276-296 (KVVSVFYSVVTPMLNPLIYSL). Residues 297 to 317 (RNKEVKGALGRVFSLNFWKGQ) lie on the Cytoplasmic side of the membrane.

This sequence belongs to the G-protein coupled receptor 1 family.

It is found in the cell membrane. Odorant receptor. The sequence is that of Olfactory receptor 6Q1 (OR6Q1) from Homo sapiens (Human).